A 111-amino-acid chain; its full sequence is Large ribosomal subunit protein uL23 (111 aa).

This sequence belongs to the universal ribosomal protein uL23 family. As to quaternary structure, part of the 50S ribosomal subunit. Contacts protein L29, and trigger factor when it is bound to the ribosome.

Functionally, one of the early assembly proteins it binds 23S rRNA. One of the proteins that surrounds the polypeptide exit tunnel on the outside of the ribosome. Forms the main docking site for trigger factor binding to the ribosome. The sequence is that of Large ribosomal subunit protein uL23 from Nitrosomonas eutropha (strain DSM 101675 / C91 / Nm57).